Here is a 213-residue protein sequence, read N- to C-terminus: Kynurenine formamidase (213 aa).

W18 serves as a coordination point for substrate. Positions 48, 52, and 54 each coordinate Zn(2+). The active-site Proton donor/acceptor is H58. Residues H160 and E172 each coordinate Zn(2+).

It belongs to the Cyclase 1 superfamily. KynB family. As to quaternary structure, homodimer. It depends on Zn(2+) as a cofactor.

It carries out the reaction N-formyl-L-kynurenine + H2O = L-kynurenine + formate + H(+). It functions in the pathway amino-acid degradation; L-tryptophan degradation via kynurenine pathway; L-kynurenine from L-tryptophan: step 2/2. Catalyzes the hydrolysis of N-formyl-L-kynurenine to L-kynurenine, the second step in the kynurenine pathway of tryptophan degradation. In Burkholderia lata (strain ATCC 17760 / DSM 23089 / LMG 22485 / NCIMB 9086 / R18194 / 383), this protein is Kynurenine formamidase.